Reading from the N-terminus, the 388-residue chain is Alanine racemase (388 aa).

Lys44 serves as the catalytic Proton acceptor; specific for D-alanine. Position 44 is an N6-(pyridoxal phosphate)lysine (Lys44). A substrate-binding site is contributed by Arg142. The Proton acceptor; specific for L-alanine role is filled by Tyr273. Met321 contacts substrate.

It belongs to the alanine racemase family. It depends on pyridoxal 5'-phosphate as a cofactor.

It catalyses the reaction L-alanine = D-alanine. The protein operates within amino-acid biosynthesis; D-alanine biosynthesis; D-alanine from L-alanine: step 1/1. Functionally, catalyzes the interconversion of L-alanine and D-alanine. May also act on other amino acids. This is Alanine racemase (alr) from Mycobacterium leprae (strain TN).